Consider the following 179-residue polypeptide: Beta-defensin 22 (179 aa).

The N-terminal stretch at 1 to 20 is a signal peptide; sequence MKSLLSTLVIIMFLAHLVTG. Disulfide bonds link C27-C58, C34-C52, and C38-C59. Residues 105 to 150 are compositionally biased toward low complexity; it reads GTPTKTSAPAKTSAPAKTSTTTKASNAAKASTTTKASNAAKASAAT. Residues 105-152 form a disordered region; it reads GTPTKTSAPAKTSAPAKTSTTTKASNAAKASTTTKASNAAKASAATMA.

The protein belongs to the beta-defensin family. In terms of processing, O-glycosylated; glycans contain alpha(2,3)-linked sialic acids. As to expression, specifically expressed in corpus epididymis and cauda epididymis with expression in corpus being highest (at protein level). Not detected in other tissues tested, including testis, prostate, seminal vesicle and vas deferens (at protein level).

It is found in the cytoplasmic vesicle. The protein resides in the secretory vesicle. It localises to the acrosome. The protein localises to the secreted. Its subcellular location is the extracellular space. Its function is as follows. Probable component of sperm glycocalyx. Likely protects and facilitates transport of sperm in the female reproductive tract. Probably released from the sperm surface during capacitation. The protein is Beta-defensin 22 of Mus musculus (Mouse).